Here is a 118-residue protein sequence, read N- to C-terminus: Protein TusC (118 aa).

Belongs to the DsrF/TusC family. Heterohexamer, formed by a dimer of trimers. The hexameric TusBCD complex contains 2 copies each of TusB, TusC and TusD. The TusBCD complex interacts with TusE.

The protein localises to the cytoplasm. Its function is as follows. Part of a sulfur-relay system required for 2-thiolation of 5-methylaminomethyl-2-thiouridine (mnm(5)s(2)U) at tRNA wobble positions. The sequence is that of Protein TusC from Salmonella typhimurium (strain LT2 / SGSC1412 / ATCC 700720).